The chain runs to 120 residues: Flagellar protein FliT (120 aa).

Positions Met1 to Asn50 are required for homodimerization. A fliD binding region spans residues Leu59–Lys97.

This sequence belongs to the FliT family. As to quaternary structure, homodimer. Interacts with FliD and FlhC.

Its subcellular location is the cytoplasm. It is found in the cytosol. In terms of biological role, dual-function protein that regulates the transcription of class 2 flagellar operons and that also acts as an export chaperone for the filament-capping protein FliD. As a transcriptional regulator, acts as an anti-FlhDC factor; it directly binds FlhC, thus inhibiting the binding of the FlhC/FlhD complex to class 2 promoters, resulting in decreased expression of class 2 flagellar operons. As a chaperone, effects FliD transition to the membrane by preventing its premature polymerization, and by directing it to the export apparatus. This is Flagellar protein FliT from Citrobacter koseri (strain ATCC BAA-895 / CDC 4225-83 / SGSC4696).